An 83-amino-acid polypeptide reads, in one-letter code: Mu-theraphotoxin-Hhn2b 2 (83 aa).

Residues 1-21 (MKASMFLALAGLVLLFVVCYA) form the signal peptide. The propeptide occupies 22 to 48 (SESEEKEFPRELISKIFTVDDFKGEER). 3 disulfide bridges follow: Cys-50/Cys-65, Cys-57/Cys-70, and Cys-64/Cys-77. Leucine amide is present on Leu-81.

Belongs to the neurotoxin 10 (Hwtx-1) family. 14 (Hntx-1) subfamily. In terms of assembly, monomer. As to expression, expressed by the venom gland.

Its subcellular location is the secreted. Its function is as follows. Weakly blocks the rat SCN2A/SCN1B (Nav1.2/beta-1) sodium channel (IC(50)=68 uM) and the insect sodium channel para/tipE (IC(50)=4.3 uM), without altering the activation or inactivation kinetics (depressant toxin). This Cyriopagopus hainanus (Chinese bird spider) protein is Mu-theraphotoxin-Hhn2b 2.